Consider the following 29-residue polypeptide: Probable small toxic protein BsrH (29 aa).

The chain crosses the membrane as a helical span at residues 6–26 (FQALMLMLAFGSFIIALLTYI).

It is found in the cell membrane. Its function is as follows. Possible toxic component of a type I toxin-antitoxin (TA) system; an overlapping antisense RNA has been identified. This chain is Probable small toxic protein BsrH, found in Bacillus subtilis (strain 168).